The primary structure comprises 368 residues: Queuine tRNA-ribosyltransferase (368 aa).

Catalysis depends on aspartate 89, which acts as the Proton acceptor. Residues 89–93, aspartate 143, glutamine 187, and glycine 214 each bind substrate; that span reads DSGGF. The active-site Nucleophile is the aspartate 264. Residues 269 to 273 are RNA binding; important for wobble base 34 recognition; that stretch reads TRNAR. Zn(2+) contacts are provided by cysteine 302, cysteine 304, cysteine 307, and histidine 333.

Belongs to the queuine tRNA-ribosyltransferase family. In terms of assembly, homodimer. Within each dimer, one monomer is responsible for RNA recognition and catalysis, while the other monomer binds to the replacement base PreQ1. The cofactor is Zn(2+).

It catalyses the reaction 7-aminomethyl-7-carbaguanine + guanosine(34) in tRNA = 7-aminomethyl-7-carbaguanosine(34) in tRNA + guanine. The protein operates within tRNA modification; tRNA-queuosine biosynthesis. Its function is as follows. Catalyzes the base-exchange of a guanine (G) residue with the queuine precursor 7-aminomethyl-7-deazaguanine (PreQ1) at position 34 (anticodon wobble position) in tRNAs with GU(N) anticodons (tRNA-Asp, -Asn, -His and -Tyr). Catalysis occurs through a double-displacement mechanism. The nucleophile active site attacks the C1' of nucleotide 34 to detach the guanine base from the RNA, forming a covalent enzyme-RNA intermediate. The proton acceptor active site deprotonates the incoming PreQ1, allowing a nucleophilic attack on the C1' of the ribose to form the product. After dissociation, two additional enzymatic reactions on the tRNA convert PreQ1 to queuine (Q), resulting in the hypermodified nucleoside queuosine (7-(((4,5-cis-dihydroxy-2-cyclopenten-1-yl)amino)methyl)-7-deazaguanosine). The polypeptide is Queuine tRNA-ribosyltransferase (Blochmanniella pennsylvanica (strain BPEN)).